The chain runs to 658 residues: Glycogen debranching enzyme (658 aa).

Asp-336 functions as the Nucleophile in the catalytic mechanism. Catalysis depends on Glu-371, which acts as the Proton donor. Residues 459–486 are disordered; it reads EANGEENRDGTNSNYSDNNGKEGLGGPL.

This sequence belongs to the glycosyl hydrolase 13 family.

It catalyses the reaction Hydrolysis of (1-&gt;6)-alpha-D-glucosidic linkages to branches with degrees of polymerization of three or four glucose residues in limit dextrin.. The protein operates within glycan degradation; glycogen degradation. Removes maltotriose and maltotetraose chains that are attached by 1,6-alpha-linkage to the limit dextrin main chain, generating a debranched limit dextrin. In Salmonella gallinarum (strain 287/91 / NCTC 13346), this protein is Glycogen debranching enzyme.